The sequence spans 226 residues: Large ribosomal subunit protein uL1 (226 aa).

It belongs to the universal ribosomal protein uL1 family. As to quaternary structure, part of the 50S ribosomal subunit.

Functionally, binds directly to 23S rRNA. The L1 stalk is quite mobile in the ribosome, and is involved in E site tRNA release. In terms of biological role, protein L1 is also a translational repressor protein, it controls the translation of the L11 operon by binding to its mRNA. In Mycoplasma capricolum subsp. capricolum (strain California kid / ATCC 27343 / NCTC 10154), this protein is Large ribosomal subunit protein uL1.